The following is a 153-amino-acid chain: Transcriptional regulator MraZ (153 aa).

SpoVT-AbrB domains lie at 7 to 61 (KEKH…LPDV) and 90 to 133 (LEMV…EPGR).

Belongs to the MraZ family. In terms of assembly, forms oligomers.

It is found in the cytoplasm. The protein resides in the nucleoid. This Chlorobium luteolum (strain DSM 273 / BCRC 81028 / 2530) (Pelodictyon luteolum) protein is Transcriptional regulator MraZ.